The sequence spans 422 residues: Histidine--tRNA ligase (422 aa).

Belongs to the class-II aminoacyl-tRNA synthetase family. In terms of assembly, homodimer.

The protein resides in the cytoplasm. It catalyses the reaction tRNA(His) + L-histidine + ATP = L-histidyl-tRNA(His) + AMP + diphosphate + H(+). This is Histidine--tRNA ligase from Onion yellows phytoplasma (strain OY-M).